The following is a 119-amino-acid chain: MKASFCVIASCLVVFALKGTAEDTGTEDDFDYGNTGCPFPVLGNYKSNMTKPVGCKNKCGSGYEVLNDTTPCYVIDQKVFNNMVPLRQYSKCPLGFCENGECKPNDQAEDCYKGREEQK.

Residues 1-21 (MKASFCVIASCLVVFALKGTA) form the signal peptide. Cystine bridges form between Cys-37-Cys-59, Cys-55-Cys-97, Cys-72-Cys-102, and Cys-92-Cys-111. 2 N-linked (GlcNAc...) asparagine glycosylation sites follow: Asn-48 and Asn-67.

The protein resides in the secreted. Functionally, salivary chemokine-binding protein which binds to host chemokines CCL2, CCL3 and CCL8. The protein is Evasin P983 of Amblyomma cajennense (Cayenne tick).